The sequence spans 312 residues: Acetyl-coenzyme A carboxylase carboxyl transferase subunit beta (312 aa).

The 270-residue stretch at 24 to 293 (LWIKCPDSGQ…VEHAKPAPQL (270 aa)) folds into the CoA carboxyltransferase N-terminal domain. Residues 286–312 (HAKPAPQLPPPAKPAETAEAPAVATSA) form a disordered region. Low complexity predominate over residues 299–312 (PAETAEAPAVATSA).

The protein belongs to the AccD/PCCB family. Acetyl-CoA carboxylase is a heterohexamer composed of biotin carboxyl carrier protein (AccB), biotin carboxylase (AccC) and two subunits each of ACCase subunit alpha (AccA) and ACCase subunit beta (AccD).

The protein localises to the cytoplasm. It carries out the reaction N(6)-carboxybiotinyl-L-lysyl-[protein] + acetyl-CoA = N(6)-biotinyl-L-lysyl-[protein] + malonyl-CoA. Its pathway is lipid metabolism; malonyl-CoA biosynthesis; malonyl-CoA from acetyl-CoA: step 1/1. In terms of biological role, component of the acetyl coenzyme A carboxylase (ACC) complex. Biotin carboxylase (BC) catalyzes the carboxylation of biotin on its carrier protein (BCCP) and then the CO(2) group is transferred by the transcarboxylase to acetyl-CoA to form malonyl-CoA. This is Acetyl-coenzyme A carboxylase carboxyl transferase subunit beta from Bradyrhizobium sp. (strain ORS 278).